Consider the following 507-residue polypeptide: Putative pentatricopeptide repeat-containing protein At3g16710, mitochondrial (507 aa).

A mitochondrion-targeting transit peptide spans 1–48; the sequence is MRRSIATGFASIVKGFHLHSHRHRLQISNPRTAASLSLCGFCFWIRAF. 13 PPR repeats span residues 47-81, 82-116, 117-151, 152-186, 187-221, 222-256, 257-291, 292-326, 327-361, 362-396, 397-431, 432-466, and 467-501; these read AFSSYRKILRNGLHNLQFNDALDLFTRMVHSRPLP, SIIDFTRLLSVIAKMNRYDVVISLFEQMQILGIPP, LLCTCNIVMHCVCLSSQPCRASCFLGKMMKLGFEP, DLVTFTSLLNGYCHWNRIEDAIALFDQILGMGFKP, NVVTYTTLIRCLCKNRHLNHAVELFNQMGTNGSRP, NVVTYNALVTGLCEIGRWGDAAWLLRDMMKRRIEP, NVITFTALIDAFVKVGKLMEAKELYNVMIQMSVYP, DVFTYGSLINGLCMYGLLDEARQMFYLMERNGCYP, NEVIYTTLIHGFCKSKRVEDGMKIFYEMSQKGVVA, NTITYTVLIQGYCLVGRPDVAQEVFNQMSSRRAPP, DIRTYNVLLDGLCCNGKVEKALMIFEYMRKREMDI, NIVTYTIIIQGMCKLGKVEDAFDLFCSLFSKGMKP, and NVITYTTMISGFCRRGLIHEADSLFKKMKEDGFLP.

It belongs to the PPR family. P subfamily.

The protein resides in the mitochondrion. This Arabidopsis thaliana (Mouse-ear cress) protein is Putative pentatricopeptide repeat-containing protein At3g16710, mitochondrial.